The sequence spans 350 residues: MSTWRASLGNTILVFCLKVFQNSRALFLRTFGLPFARYLNFILPSEFKMSLNGFGEHTRSASHAGSWYNANQRDLDRQLTKWLDNAGPRIGTARALISPHAGYSYCGETAAYAFKQVVSSAVERVFILGPSHVVALNGCAITTCSKYRTPLGDLIVDHKINEELRATRHFDLMDRRDEESEHSIEMQLPFIAKVMGSKRYTIVPVLVGSLPGSRQQTYGNIFAHYMEDPRNLFVISSDFCHWGERFSFSPYDRHSSIPIYEQITNMDKQGMSAIETLNPAAFNDYLKKTQNTICGRNPILIMLQAAEHFRISNNHTHEFRFLHYTQSNKVRSSVDSSVSYASGVLFVHPN.

Belongs to the MEMO1 family. As to quaternary structure, interacts with rho-1. As to expression, expressed in neuronal and non-neuronal cells in the head and tail, pharyngeal cells, spermatheca, distal tip cells, anchor cell and the intestine.

Its function is as follows. Plays a role in the oxidative stress response and the maintenance of longevity by regulating the interaction between GTPase rho-1 and oxidase bli-3. In turn, this serves to modulate bli-3 activity and the control of reactive oxygen species production. May control cell migration by relaying extracellular chemotactic signals to the microtubule cytoskeleton. This is Protein memo-1 homolog from Caenorhabditis elegans.